Reading from the N-terminus, the 286-residue chain is Probable ketoamine kinase YniA (286 aa).

91 to 93 (DYL) provides a ligand contact to ATP. Aspartate 193 (proton acceptor) is an active-site residue.

This sequence belongs to the fructosamine kinase family.

Its function is as follows. Ketoamine kinase that phosphorylates ketoamines on the third carbon of the sugar moiety to generate ketoamine 3-phosphate. This is Probable ketoamine kinase YniA (yniA) from Escherichia coli O157:H7.